Reading from the N-terminus, the 269-residue chain is Phosphate import ATP-binding protein PstB 2 (269 aa).

The ABC transporter domain occupies 22 to 264 (LSTNDLRVFY…PSLQSTEDYV (243 aa)). 55 to 62 (GPSGSGKS) contacts ATP.

Belongs to the ABC transporter superfamily. Phosphate importer (TC 3.A.1.7) family. As to quaternary structure, the complex is composed of two ATP-binding proteins (PstB), two transmembrane proteins (PstC and PstA) and a solute-binding protein (PstS).

It localises to the cell membrane. It catalyses the reaction phosphate(out) + ATP + H2O = ADP + 2 phosphate(in) + H(+). Its function is as follows. Part of the ABC transporter complex PstSACB involved in phosphate import. Responsible for energy coupling to the transport system. The polypeptide is Phosphate import ATP-binding protein PstB 2 (Lactococcus lactis subsp. lactis (strain IL1403) (Streptococcus lactis)).